Reading from the N-terminus, the 292-residue chain is uncharacterized protein (292 aa).

A run of 4 helical transmembrane segments spans residues 17–37, 135–155, 166–186, and 216–236; these read LFYT…FPAL, LIAV…IGQL, TTLW…YDIV, and FHGV…TALY. The segment at 267–292 is disordered; the sequence is EKSEDKKSIVTSRIEEENEDEISDYE. Residues 282-292 are compositionally biased toward acidic residues; sequence EENEDEISDYE.

Its subcellular location is the membrane. This is an uncharacterized protein from Caenorhabditis elegans.